The following is a 281-amino-acid chain: Protoheme IX farnesyltransferase (281 aa).

A run of 9 helical transmembrane segments spans residues 16–36, 38–58, 75–95, 101–121, 129–149, 150–170, 202–224, 228–250, and 261–281; these read TFLL…GADF, FVIA…INMW, VPAG…IFAI, FLVS…DIVV, KSPY…LGGW, VAVQ…LLWI, ASWA…YVLL, IFYL…KFAL, and YKLA…GVFL.

It belongs to the UbiA prenyltransferase family. Protoheme IX farnesyltransferase subfamily.

It localises to the cell membrane. It catalyses the reaction heme b + (2E,6E)-farnesyl diphosphate + H2O = Fe(II)-heme o + diphosphate. It functions in the pathway porphyrin-containing compound metabolism; heme O biosynthesis; heme O from protoheme: step 1/1. Functionally, converts heme B (protoheme IX) to heme O by substitution of the vinyl group on carbon 2 of heme B porphyrin ring with a hydroxyethyl farnesyl side group. This Archaeoglobus fulgidus (strain ATCC 49558 / DSM 4304 / JCM 9628 / NBRC 100126 / VC-16) protein is Protoheme IX farnesyltransferase.